We begin with the raw amino-acid sequence, 477 residues long: Glutamyl-tRNA reductase (477 aa).

Residues 49-52 (TCNR), serine 109, 114-116 (EGQ), and glutamine 120 contribute to the substrate site. Cysteine 50 functions as the Nucleophile in the catalytic mechanism. 221 to 226 (GAGSMS) is a binding site for NADP(+).

Belongs to the glutamyl-tRNA reductase family. As to quaternary structure, homodimer.

The catalysed reaction is (S)-4-amino-5-oxopentanoate + tRNA(Glu) + NADP(+) = L-glutamyl-tRNA(Glu) + NADPH + H(+). It functions in the pathway porphyrin-containing compound metabolism; protoporphyrin-IX biosynthesis; 5-aminolevulinate from L-glutamyl-tRNA(Glu): step 1/2. Functionally, catalyzes the NADPH-dependent reduction of glutamyl-tRNA(Glu) to glutamate 1-semialdehyde (GSA). In Thermobifida fusca (strain YX), this protein is Glutamyl-tRNA reductase.